Here is a 155-residue protein sequence, read N- to C-terminus: Endoribonuclease YbeY (155 aa).

Positions 117, 121, and 127 each coordinate Zn(2+).

It belongs to the endoribonuclease YbeY family. Zn(2+) is required as a cofactor.

The protein localises to the cytoplasm. Single strand-specific metallo-endoribonuclease involved in late-stage 70S ribosome quality control and in maturation of the 3' terminus of the 16S rRNA. The protein is Endoribonuclease YbeY of Psychrobacter cryohalolentis (strain ATCC BAA-1226 / DSM 17306 / VKM B-2378 / K5).